The following is a 929-amino-acid chain: Isoleucine--tRNA ligase (929 aa).

Positions Pro-58–His-68 match the 'HIGH' region motif. Position 563 (Glu-563) interacts with L-isoleucyl-5'-AMP. The 'KMSKS' region signature appears at Lys-605 to Ser-609. Residue Lys-608 coordinates ATP. Zn(2+)-binding residues include Cys-892, Cys-895, Cys-912, and Cys-915.

This sequence belongs to the class-I aminoacyl-tRNA synthetase family. IleS type 1 subfamily. Monomer. Zn(2+) serves as cofactor.

The protein resides in the cytoplasm. It carries out the reaction tRNA(Ile) + L-isoleucine + ATP = L-isoleucyl-tRNA(Ile) + AMP + diphosphate. Its function is as follows. Catalyzes the attachment of isoleucine to tRNA(Ile). As IleRS can inadvertently accommodate and process structurally similar amino acids such as valine, to avoid such errors it has two additional distinct tRNA(Ile)-dependent editing activities. One activity is designated as 'pretransfer' editing and involves the hydrolysis of activated Val-AMP. The other activity is designated 'posttransfer' editing and involves deacylation of mischarged Val-tRNA(Ile). This chain is Isoleucine--tRNA ligase, found in Neisseria meningitidis serogroup B (strain ATCC BAA-335 / MC58).